Consider the following 128-residue polypeptide: Large ribosomal subunit protein bL17 (128 aa).

This sequence belongs to the bacterial ribosomal protein bL17 family. Part of the 50S ribosomal subunit. Contacts protein L32.

This chain is Large ribosomal subunit protein bL17, found in Streptococcus thermophilus (strain ATCC BAA-250 / LMG 18311).